The following is a 640-amino-acid chain: Threonine--tRNA ligase (640 aa).

In terms of domain architecture, TGS spans 1-61; sequence MPIITLPNGD…TEDATLQIIT (61 aa). The interval 242-533 is catalytic; that stretch reads DHRKIGKALD…LIEHYAGFMP (292 aa). Zn(2+) contacts are provided by C333, H384, and H510.

The protein belongs to the class-II aminoacyl-tRNA synthetase family. Homodimer. Zn(2+) is required as a cofactor.

It localises to the cytoplasm. It carries out the reaction tRNA(Thr) + L-threonine + ATP = L-threonyl-tRNA(Thr) + AMP + diphosphate + H(+). Catalyzes the attachment of threonine to tRNA(Thr) in a two-step reaction: L-threonine is first activated by ATP to form Thr-AMP and then transferred to the acceptor end of tRNA(Thr). Also edits incorrectly charged L-seryl-tRNA(Thr). This Acinetobacter baylyi (strain ATCC 33305 / BD413 / ADP1) protein is Threonine--tRNA ligase.